A 294-amino-acid chain; its full sequence is Cytidine deaminase (294 aa).

2 CMP/dCMP-type deaminase domains span residues 48 to 168 (DEDA…FGPK) and 186 to 294 (LTGD…VLLG). Residue 89 to 91 (NME) participates in substrate binding. Zn(2+) is bound at residue histidine 102. Catalysis depends on glutamate 104, which acts as the Proton donor. Residues cysteine 129 and cysteine 132 each contribute to the Zn(2+) site.

This sequence belongs to the cytidine and deoxycytidylate deaminase family. In terms of assembly, homodimer. Requires Zn(2+) as cofactor.

The catalysed reaction is cytidine + H2O + H(+) = uridine + NH4(+). It carries out the reaction 2'-deoxycytidine + H2O + H(+) = 2'-deoxyuridine + NH4(+). In terms of biological role, this enzyme scavenges exogenous and endogenous cytidine and 2'-deoxycytidine for UMP synthesis. This Salmonella dublin (strain CT_02021853) protein is Cytidine deaminase.